The chain runs to 395 residues: Ribonuclease D (395 aa).

One can recognise a 3'-5' exonuclease domain in the interval 14 to 181 (LITKSEDLAA…VYETLRDRLE (168 aa)). Residues 219-300 (NRRYLGLLRA…AEARGLPDAD (82 aa)) enclose the HRDC domain.

The protein belongs to the RNase D family. A divalent metal cation serves as cofactor.

It is found in the cytoplasm. It carries out the reaction Exonucleolytic cleavage that removes extra residues from the 3'-terminus of tRNA to produce 5'-mononucleotides.. In terms of biological role, exonuclease involved in the 3' processing of various precursor tRNAs. Initiates hydrolysis at the 3'-terminus of an RNA molecule and releases 5'-mononucleotides. This chain is Ribonuclease D, found in Granulibacter bethesdensis (strain ATCC BAA-1260 / CGDNIH1).